Consider the following 151-residue polypeptide: 3-hydroxyacyl-[acyl-carrier-protein] dehydratase FabZ (151 aa).

His-56 is a catalytic residue.

This sequence belongs to the thioester dehydratase family. FabZ subfamily.

The protein localises to the cytoplasm. The enzyme catalyses a (3R)-hydroxyacyl-[ACP] = a (2E)-enoyl-[ACP] + H2O. Functionally, involved in unsaturated fatty acids biosynthesis. Catalyzes the dehydration of short chain beta-hydroxyacyl-ACPs and long chain saturated and unsaturated beta-hydroxyacyl-ACPs. The sequence is that of 3-hydroxyacyl-[acyl-carrier-protein] dehydratase FabZ from Nitrobacter winogradskyi (strain ATCC 25391 / DSM 10237 / CIP 104748 / NCIMB 11846 / Nb-255).